The chain runs to 262 residues: Indole-3-glycerol phosphate synthase (262 aa).

The protein belongs to the TrpC family.

The catalysed reaction is 1-(2-carboxyphenylamino)-1-deoxy-D-ribulose 5-phosphate + H(+) = (1S,2R)-1-C-(indol-3-yl)glycerol 3-phosphate + CO2 + H2O. Its pathway is amino-acid biosynthesis; L-tryptophan biosynthesis; L-tryptophan from chorismate: step 4/5. In Dechloromonas aromatica (strain RCB), this protein is Indole-3-glycerol phosphate synthase.